Reading from the N-terminus, the 134-residue chain is Holo-[acyl-carrier-protein] synthase (134 aa).

D8 and E58 together coordinate Mg(2+).

Belongs to the P-Pant transferase superfamily. AcpS family. Mg(2+) is required as a cofactor.

Its subcellular location is the cytoplasm. The catalysed reaction is apo-[ACP] + CoA = holo-[ACP] + adenosine 3',5'-bisphosphate + H(+). Functionally, transfers the 4'-phosphopantetheine moiety from coenzyme A to a Ser of acyl-carrier-protein. This Ruminiclostridium cellulolyticum (strain ATCC 35319 / DSM 5812 / JCM 6584 / H10) (Clostridium cellulolyticum) protein is Holo-[acyl-carrier-protein] synthase.